The sequence spans 344 residues: Ion-translocating oxidoreductase complex subunit D (344 aa).

Transmembrane regions (helical) follow at residues 23–43 (LVLGACVPGLFTLTWLYGAGT), 44–64 (LLNLAWAGLVALACEAAMLAL), 80–100 (VTALLLAVALPPCAPWLLTLV), and 120–140 (PFNPAMLGYVVALVSFPLEMT). Thr-172 bears the FMN phosphoryl threonine mark. 5 consecutive transmembrane segments (helical) span residues 198–218 (LGGAGGEWVNLAFLLGGLFLL), 222–242 (LFTWHAPLGMLAGLFAMSLLF), 252–272 (GSPLFHLFSGATMLGAFFIVT), 285–305 (LLFGLGVGVLTYLIRAWGGYP), and 306–326 (DGVAFAVLLMNLAAPTIDYYT).

The protein belongs to the NqrB/RnfD family. In terms of assembly, the complex is composed of six subunits: RnfA, RnfB, RnfC, RnfD, RnfE and RnfG. It depends on FMN as a cofactor.

It localises to the cell inner membrane. In terms of biological role, part of a membrane-bound complex that couples electron transfer with translocation of ions across the membrane. The protein is Ion-translocating oxidoreductase complex subunit D of Pseudomonas paraeruginosa (strain DSM 24068 / PA7) (Pseudomonas aeruginosa (strain PA7)).